We begin with the raw amino-acid sequence, 460 residues long: Bifunctional protein GlmU (460 aa).

The interval 1 to 232 (MAISAALILA…PDEIMGVNDR (232 aa)) is pyrophosphorylase. UDP-N-acetyl-alpha-D-glucosamine is bound by residues 9-12 (LAAG), lysine 23, glutamine 75, and 80-81 (GT). Mg(2+) is bound at residue aspartate 105. Residues glycine 142, glutamate 157, asparagine 172, and asparagine 230 each coordinate UDP-N-acetyl-alpha-D-glucosamine. Residue asparagine 230 coordinates Mg(2+). Residues 233–253 (VQLAHAARVLRQRVNLQLMLA) are linker. The tract at residues 254-460 (GVTLIDPDQT…GWCLKKRDNG (207 aa)) is N-acetyltransferase. UDP-N-acetyl-alpha-D-glucosamine is bound by residues arginine 336 and lysine 354. Histidine 366 functions as the Proton acceptor in the catalytic mechanism. 2 residues coordinate UDP-N-acetyl-alpha-D-glucosamine: tyrosine 369 and asparagine 380. Acetyl-CoA-binding positions include 389–390 (NY), serine 408, alanine 426, and arginine 443.

This sequence in the N-terminal section; belongs to the N-acetylglucosamine-1-phosphate uridyltransferase family. The protein in the C-terminal section; belongs to the transferase hexapeptide repeat family. As to quaternary structure, homotrimer. The cofactor is Mg(2+).

The protein resides in the cytoplasm. It catalyses the reaction alpha-D-glucosamine 1-phosphate + acetyl-CoA = N-acetyl-alpha-D-glucosamine 1-phosphate + CoA + H(+). The catalysed reaction is N-acetyl-alpha-D-glucosamine 1-phosphate + UTP + H(+) = UDP-N-acetyl-alpha-D-glucosamine + diphosphate. Its pathway is nucleotide-sugar biosynthesis; UDP-N-acetyl-alpha-D-glucosamine biosynthesis; N-acetyl-alpha-D-glucosamine 1-phosphate from alpha-D-glucosamine 6-phosphate (route II): step 2/2. It functions in the pathway nucleotide-sugar biosynthesis; UDP-N-acetyl-alpha-D-glucosamine biosynthesis; UDP-N-acetyl-alpha-D-glucosamine from N-acetyl-alpha-D-glucosamine 1-phosphate: step 1/1. It participates in bacterial outer membrane biogenesis; LPS lipid A biosynthesis. Its function is as follows. Catalyzes the last two sequential reactions in the de novo biosynthetic pathway for UDP-N-acetylglucosamine (UDP-GlcNAc). The C-terminal domain catalyzes the transfer of acetyl group from acetyl coenzyme A to glucosamine-1-phosphate (GlcN-1-P) to produce N-acetylglucosamine-1-phosphate (GlcNAc-1-P), which is converted into UDP-GlcNAc by the transfer of uridine 5-monophosphate (from uridine 5-triphosphate), a reaction catalyzed by the N-terminal domain. This chain is Bifunctional protein GlmU, found in Trichlorobacter lovleyi (strain ATCC BAA-1151 / DSM 17278 / SZ) (Geobacter lovleyi).